A 429-amino-acid polypeptide reads, in one-letter code: Ribosomal RNA small subunit methyltransferase B (429 aa).

S-adenosyl-L-methionine contacts are provided by residues 254–260 (CAAPGGK), Asp277, Asp303, and Asp322. Cys375 functions as the Nucleophile in the catalytic mechanism. Positions 397 to 419 (ALSETGTPDQPGQQNLPGGEEGD) are disordered. Residues 400–412 (ETGTPDQPGQQNL) show a composition bias toward polar residues.

This sequence belongs to the class I-like SAM-binding methyltransferase superfamily. RsmB/NOP family.

Its subcellular location is the cytoplasm. The enzyme catalyses cytidine(967) in 16S rRNA + S-adenosyl-L-methionine = 5-methylcytidine(967) in 16S rRNA + S-adenosyl-L-homocysteine + H(+). Functionally, specifically methylates the cytosine at position 967 (m5C967) of 16S rRNA. The protein is Ribosomal RNA small subunit methyltransferase B of Salmonella typhi.